Reading from the N-terminus, the 199-residue chain is Transmembrane protein 9B (199 aa).

A signal peptide spans 1-34 (MASLWCGNLLRLGSGLSMSCLALSVLLLAQLTGA). The N-linked (GlcNAc...) asparagine glycan is linked to Asn-61. The helical transmembrane segment at 106–126 (IIIYLSILGLLLLYMVYLTLV) threads the bilayer. Residues Ser-143 and Ser-190 each carry the phosphoserine modification.

The protein belongs to the TMEM9 family. In terms of processing, N-glycosylated.

Its subcellular location is the lysosome membrane. The protein localises to the early endosome membrane. Functionally, enhances production of pro-inflammatory cytokines induced by TNF, IL1B, and TLR ligands. Has a role in TNF activation of both the NF-kappaB and MAPK pathways. This Mus musculus (Mouse) protein is Transmembrane protein 9B (Tmem9b).